The primary structure comprises 1271 residues: Diacylglycerol kinase kappa (1271 aa).

A compositionally biased stretch (low complexity) spans 1–15; that stretch reads MDRGAAAAQGTAPPQ. Residues 1 to 160 form a disordered region; it reads MDRGAAAAQG…PEPTPEPVTE (160 aa). Positions 23-44 are enriched in pro residues; that stretch reads SPEPPPPWPPPPPPPAPPPAPP. 33 consecutive repeat copies span residues 48–51, 52–55, 56–59, 60–63, 64–67, 68–71, 72–75, 76–79, 80–83, 84–87, 88–91, 92–95, 96–99, 100–103, 104–107, 108–111, 112–115, 116–119, 120–123, 124–127, 128–131, 132–135, 136–139, 140–143, 144–147, 148–151, 152–155, 156–159, 160–163, 164–167, 168–171, 172–175, and 176–179. Residues 48–179 are 33 X 4 AA approximate tandem repeats of E-P-A-P; sequence EASPEPIPEP…APEFRPSPAP (132 aa). Over residues 52-66 the composition is skewed to pro residues; sequence EPIPEPCPELAPGPC. Y78 carries the post-translational modification Phosphotyrosine. The span at 82–116 shows a compositional bias: pro residues; the sequence is TPEPATEPASEPAPEPATEPAPEPATEPAPEPAPE. Residues 139–149 are compositionally biased toward low complexity; it reads PELTPEVAPEL. Positions 190–209 are disordered; sequence ERGLKTSPSPSPSPSPRTPM. A PH domain is found at 216–309; the sequence is KILKEGPMLK…WINIIKTIQQ (94 aa). 2 consecutive Phorbol-ester/DAG-type zinc fingers follow at residues 327–377 and 398–449; these read MHCW…SKDC and PHQW…SKEC. A DAGKc domain is found at 487–622; it reads ACSCPLLIFI…LDRWSVMIRE (136 aa). Disordered stretches follow at residues 805–825 and 1252–1271; these read DDPE…GTLS and RHRE…RSQL. The tract at residues 1199 to 1268 is required for localization to the plasma membrane; the sequence is PIFVPEEKSS…EGDDPLTPSR (70 aa).

The protein belongs to the eukaryotic diacylglycerol kinase family. Does not form homooligomers. Post-translationally, phosphorylated at Tyr-78 by some member of the SRC family in response to H(2)O(2). As to expression, expressed in testis, and to a lesser extent in placenta.

Its subcellular location is the cell membrane. It carries out the reaction a 1,2-diacyl-sn-glycerol + ATP = a 1,2-diacyl-sn-glycero-3-phosphate + ADP + H(+). The enzyme catalyses 1,2-di-(9Z-octadecenoyl)-sn-glycerol + ATP = 1,2-di-(9Z-octadecenoyl)-sn-glycero-3-phosphate + ADP + H(+). Its pathway is lipid metabolism; glycerolipid metabolism. Its activity is regulated as follows. Inhibited in response to H(2)O(2). Diacylglycerol kinase that converts diacylglycerol/DAG into phosphatidic acid/phosphatidate/PA and regulates the respective levels of these two bioactive lipids. Thereby, acts as a central switch between the signaling pathways activated by these second messengers with different cellular targets and opposite effects in numerous biological processes. This Homo sapiens (Human) protein is Diacylglycerol kinase kappa.